The primary structure comprises 80 residues: Cytochrome c oxidase subunit 7B, mitochondrial (80 aa).

A mitochondrion-targeting transit peptide spans 1 to 24 (MLPLAKNALSRLQVRSIQQVVARQ). Topologically, residues 25–39 (SHQKRAPSFHDKYGN) are mitochondrial matrix. A helical transmembrane segment spans residues 40-60 (AILAGGAIFCVSTWTYTATQI). Residues 61-80 (GIEWNMSPVGRVTPKEWRDQ) lie on the Mitochondrial intermembrane side of the membrane.

The protein belongs to the cytochrome c oxidase VIIb family. In terms of assembly, component of the cytochrome c oxidase (complex IV, CIV), a multisubunit enzyme composed of 14 subunits. The complex is composed of a catalytic core of 3 subunits MT-CO1, MT-CO2 and MT-CO3, encoded in the mitochondrial DNA, and 11 supernumerary subunits COX4I, COX5A, COX5B, COX6A, COX6B, COX6C, COX7A, COX7B, COX7C, COX8 and NDUFA4, which are encoded in the nuclear genome. The complex exists as a monomer or a dimer and forms supercomplexes (SCs) in the inner mitochondrial membrane with NADH-ubiquinone oxidoreductase (complex I, CI) and ubiquinol-cytochrome c oxidoreductase (cytochrome b-c1 complex, complex III, CIII), resulting in different assemblies (supercomplex SCI(1)III(2)IV(1) and megacomplex MCI(2)III(2)IV(2)).

It localises to the mitochondrion inner membrane. Its pathway is energy metabolism; oxidative phosphorylation. In terms of biological role, component of the cytochrome c oxidase, the last enzyme in the mitochondrial electron transport chain which drives oxidative phosphorylation. The respiratory chain contains 3 multisubunit complexes succinate dehydrogenase (complex II, CII), ubiquinol-cytochrome c oxidoreductase (cytochrome b-c1 complex, complex III, CIII) and cytochrome c oxidase (complex IV, CIV), that cooperate to transfer electrons derived from NADH and succinate to molecular oxygen, creating an electrochemical gradient over the inner membrane that drives transmembrane transport and the ATP synthase. Cytochrome c oxidase is the component of the respiratory chain that catalyzes the reduction of oxygen to water. Electrons originating from reduced cytochrome c in the intermembrane space (IMS) are transferred via the dinuclear copper A center (CU(A)) of subunit 2 and heme A of subunit 1 to the active site in subunit 1, a binuclear center (BNC) formed by heme A3 and copper B (CU(B)). The BNC reduces molecular oxygen to 2 water molecules using 4 electrons from cytochrome c in the IMS and 4 protons from the mitochondrial matrix. Plays a role in proper central nervous system (CNS) development in vertebrates. The chain is Cytochrome c oxidase subunit 7B, mitochondrial (Cox7b) from Mus musculus (Mouse).